A 145-amino-acid polypeptide reads, in one-letter code: U20-hexatoxin-Hi1a (145 aa).

A signal peptide spans 1–16 (MYQFLIIVILAAFVNG). Thyroglobulin type-1 domains are found at residues 20–73 (KTEC…GQPM) and 82–145 (ACEC…RLEC). Intrachain disulfides connect Cys23–Cys45, Cys56–Cys63, Cys85–Cys106, Cys117–Cys124, and Cys126–Cys145.

As to expression, expressed by the venom gland.

The protein resides in the secreted. Its function is as follows. Cysteine proteinase inhibitor. The protein is U20-hexatoxin-Hi1a of Hadronyche infensa (Fraser island funnel-web spider).